Consider the following 190-residue polypeptide: Signal peptidase I W (190 aa).

The chain crosses the membrane as a helical span at residues 4 to 24 (ISNILYVIIFTLIIVLTLVVI). The active site involves S45. Residues 143–163 (PIGTAVLLIVPGVMLLVYAFV) traverse the membrane as a helical segment.

Belongs to the peptidase S26B family.

The protein resides in the cell membrane. The enzyme catalyses Cleavage of hydrophobic, N-terminal signal or leader sequences from secreted and periplasmic proteins.. In terms of biological role, required for the cleavage of the signal sequence of TasA and TapA, which are involved in biofilm formation. The sequence is that of Signal peptidase I W from Bacillus subtilis (strain 168).